Here is a 161-residue protein sequence, read N- to C-terminus: Cuticle protein 16.8 (161 aa).

Pyrrolidone carboxylic acid is present on Gln-1. A compositionally biased stretch (pro residues) spans 1-10; it reads QSEPAGPPQP. 2 disordered regions span residues 1–44 and 67–103; these read QSEP…YSYT and ETNEPGTKTSNPADAQIVSNAATDSYSPSPASSPAKP. The Chitin-binding type R&amp;R domain maps to 8-74; that stretch reads PQPYTFSYDN…TVETNEPGTK (67 aa). Over residues 67–86 the composition is skewed to polar residues; sequence ETNEPGTKTSNPADAQIVSN. Over residues 87-103 the composition is skewed to low complexity; that stretch reads AATDSYSPSPASSPAKP.

In terms of biological role, component of the cuticle of the tick. Binds chitin. The protein is Cuticle protein 16.8 of Ixodes ricinus (Common tick).